We begin with the raw amino-acid sequence, 113 residues long: Outer membrane protein assembly factor BamE (113 aa).

An N-terminal signal peptide occupies residues 1–19 (MRCKTLTAAAAVLLMLTAG). Cys-20 is lipidated: N-palmitoyl cysteine. A lipid anchor (S-diacylglycerol cysteine) is attached at Cys-20.

The protein belongs to the BamE family. In terms of assembly, part of the Bam complex, which is composed of the outer membrane protein BamA, and four lipoproteins BamB, BamC, BamD and BamE.

The protein localises to the cell outer membrane. Its function is as follows. Part of the outer membrane protein assembly complex, which is involved in assembly and insertion of beta-barrel proteins into the outer membrane. The sequence is that of Outer membrane protein assembly factor BamE from Escherichia coli O6:H1 (strain CFT073 / ATCC 700928 / UPEC).